The following is an 848-amino-acid chain: Aryl hydrocarbon receptor (848 aa).

A propeptide spanning residues 1-9 (MSSGANITY) is cleaved from the precursor. The segment at 1-38 (MSSGANITYASRKRRKPVQKTVKPIPAEGIKSNPSKRH) is disordered. 2 short sequence motifs (nuclear localization signal) span residues 12 to 15 (RKRR) and 36 to 41 (KRHRDR). Residues 26 to 79 (PAEGIKSNPSKRHRDRLNTELDRLASLLPFPQDVINKLDKLSVLRLSVSYLRAK) form the bHLH domain. The DNA-binding stretch occupies residues 37-65 (RHRDRLNTELDRLASLLPFPQDVINKLDK). 3 required for maintaining the overall integrity of the AHR:ARNT heterodimer and its transcriptional activity regions span residues 49–81 (LASLLPFPQDVINKLDKLSVLRLSVSYLRAKSF), 116–124 (LLQALNGFV), and 260–262 (FAI). The Nuclear export signal motif lies at 63–71 (LDKLSVLRL). Residues 111–175 (QEGEFLLQAL…AEFQRQLHWA (65 aa)) enclose the PAS 1 domain. A PAS 2 domain is found at 266–336 (LQPPSILEIR…CAESHIRMIK (71 aa)). The 42-residue stretch at 342–383 (MTVFRLLAKHSRWRWVQSNARLIYRNGRPDYIIVTQRPLTDE) folds into the PAC domain. The tract at residues 421–449 (LPIRTKSNTSRKDWAPQSTPSKDSFHPSS) is disordered. Residues 436–449 (PQSTPSKDSFHPSS) show a composition bias toward polar residues.

As to quaternary structure, homodimer. Heterodimer; efficient DNA binding requires dimerization with another bHLH protein. Interacts with ARNT; the heterodimer ARNT:AHR binds to core DNA sequence 5'-TGCGTG-3' within the dioxin response element (DRE) of target gene promoters and activates their transcription. Binds MYBBP1A. Interacts with coactivators including SRC-1, RIP140 and NOCA7, and with the corepressor SMRT. Interacts with NEDD8 and IVNS1ABP. Interacts with BMAL1. Interacts with HSP90AB1. Interacts with TIPARP; leading to mono-ADP-ribosylation of AHR and subsequent inhibition of AHR. Post-translationally, mono-ADP-ribosylated, leading to inhibit transcription activator activity of AHR.

The protein resides in the cytoplasm. It localises to the nucleus. Functionally, ligand-activated transcription factor that enables cells to adapt to changing conditions by sensing compounds from the environment, diet, microbiome and cellular metabolism, and which plays important roles in development, immunity and cancer. Upon ligand binding, translocates into the nucleus, where it heterodimerizes with ARNT and induces transcription by binding to xenobiotic response elements (XRE). Regulates a variety of biological processes, including angiogenesis, hematopoiesis, drug and lipid metabolism, cell motility and immune modulation. Xenobiotics can act as ligands: upon xenobiotic-binding, activates the expression of multiple phase I and II xenobiotic chemical metabolizing enzyme genes (such as the CYP1A1 gene). Mediates biochemical and toxic effects of halogenated aromatic hydrocarbons. Next to xenobiotics, natural ligands derived from plants, microbiota, and endogenous metabolism are potent AHR agonists. Tryptophan (Trp) derivatives constitute an important class of endogenous AHR ligands. Acts as a negative regulator of anti-tumor immunity: indoles and kynurenic acid generated by Trp catabolism act as ligand and activate AHR, thereby promoting AHR-driven cancer cell motility and suppressing adaptive immunity. Regulates the circadian clock by inhibiting the basal and circadian expression of the core circadian component PER1. Inhibits PER1 by repressing the CLOCK-BMAL1 heterodimer mediated transcriptional activation of PER1. The heterodimer ARNT:AHR binds to core DNA sequence 5'-TGCGTG-3' within the dioxin response element (DRE) of target gene promoters and activates their transcription. The sequence is that of Aryl hydrocarbon receptor (Ahr) from Mus musculus castaneus (Southeastern Asian house mouse).